Reading from the N-terminus, the 268-residue chain is Phosphatidylglycerol--prolipoprotein diacylglyceryl transferase (268 aa).

7 helical membrane passes run 14 to 34 (IIFSLGPISLRWYGLMYLIGF), 60 to 80 (LLFNGFAGVFLGGRIGYVLFY), 95 to 115 (VWEGGMSFHGGLIGVIVAMLV), 124 to 144 (FWVVADFVAPLIPFGLGMGRI), 176 to 196 (SQLYEFVLEGIVLFCILNWFI), 203 to 223 (GSVAGLFLLFYGLFRFIVEFF), and 238 to 258 (ISMGQILSTPMILLGALFIVL). Arg143 contacts a 1,2-diacyl-sn-glycero-3-phospho-(1'-sn-glycerol).

This sequence belongs to the Lgt family.

The protein resides in the cell inner membrane. The catalysed reaction is L-cysteinyl-[prolipoprotein] + a 1,2-diacyl-sn-glycero-3-phospho-(1'-sn-glycerol) = an S-1,2-diacyl-sn-glyceryl-L-cysteinyl-[prolipoprotein] + sn-glycerol 1-phosphate + H(+). Its pathway is protein modification; lipoprotein biosynthesis (diacylglyceryl transfer). Functionally, catalyzes the transfer of the diacylglyceryl group from phosphatidylglycerol to the sulfhydryl group of the N-terminal cysteine of a prolipoprotein, the first step in the formation of mature lipoproteins. This is Phosphatidylglycerol--prolipoprotein diacylglyceryl transferase from Mannheimia succiniciproducens (strain KCTC 0769BP / MBEL55E).